A 161-amino-acid polypeptide reads, in one-letter code: Ribonuclease P protein component 2 (161 aa).

It belongs to the eukaryotic/archaeal RNase P protein component 2 family. As to quaternary structure, consists of a catalytic RNA component and at least 4-5 protein subunits.

Its subcellular location is the cytoplasm. It catalyses the reaction Endonucleolytic cleavage of RNA, removing 5'-extranucleotides from tRNA precursor.. Part of ribonuclease P, a protein complex that generates mature tRNA molecules by cleaving their 5'-ends. The sequence is that of Ribonuclease P protein component 2 from Natronomonas pharaonis (strain ATCC 35678 / DSM 2160 / CIP 103997 / JCM 8858 / NBRC 14720 / NCIMB 2260 / Gabara) (Halobacterium pharaonis).